The following is a 966-amino-acid chain: Alpha-1,4 glucan phosphorylase L-1 isozyme, chloroplastic/amyloplastic (966 aa).

The transit peptide at 1 to 50 (MATANGAHLFNHYSSNSRFIHFTSRNTSSKLFLTKTSHFRRPKRCFHVNN) directs the protein to the chloroplast. K812 is subject to N6-(pyridoxal phosphate)lysine.

Belongs to the glycogen phosphorylase family. Pyridoxal 5'-phosphate serves as cofactor. In terms of tissue distribution, tuber.

It is found in the plastid. Its subcellular location is the chloroplast. The protein resides in the amyloplast. It catalyses the reaction [(1-&gt;4)-alpha-D-glucosyl](n) + phosphate = [(1-&gt;4)-alpha-D-glucosyl](n-1) + alpha-D-glucose 1-phosphate. Functionally, phosphorylase is an important allosteric enzyme in carbohydrate metabolism. Enzymes from different sources differ in their regulatory mechanisms and in their natural substrates. However, all known phosphorylases share catalytic and structural properties. The chain is Alpha-1,4 glucan phosphorylase L-1 isozyme, chloroplastic/amyloplastic from Solanum tuberosum (Potato).